The following is a 341-amino-acid chain: NADH-ubiquinone oxidoreductase chain 2 (341 aa).

A run of 9 helical transmembrane segments spans residues 8 to 28 (IFLIMLIFGTLVTISSNSWLG), 61 to 81 (FLTQAFASSILLFAIIMLMFL), 95 to 115 (ILILSTLLLKSGAAPFHFWFP), 145 to 165 (FIYNFFMISIILSMLIGSLGG), 174 to 191 (LMAFSSINHLGWMLLAMM), 195 to 215 (MLWMTYFLMYSLLSFSIVLMF), 238 to 258 (LLIFLNLLSLGGLPPFLGFLP), 272 to 292 (LFILTISVCLTLITLYFYLRL), and 321 to 341 (LIFNFISIGGLVMISMIYIIM).

The protein belongs to the complex I subunit 2 family.

It localises to the mitochondrion inner membrane. It catalyses the reaction a ubiquinone + NADH + 5 H(+)(in) = a ubiquinol + NAD(+) + 4 H(+)(out). In terms of biological role, core subunit of the mitochondrial membrane respiratory chain NADH dehydrogenase (Complex I) that is believed to belong to the minimal assembly required for catalysis. Complex I functions in the transfer of electrons from NADH to the respiratory chain. The immediate electron acceptor for the enzyme is believed to be ubiquinone. This Anopheles gambiae (African malaria mosquito) protein is NADH-ubiquinone oxidoreductase chain 2 (mt:ND2).